We begin with the raw amino-acid sequence, 290 residues long: Zinc finger matrin-type protein 3 (290 aa).

Matrin-type zinc fingers lie at residues 70–100 and 148–178; these read LFCK…KLRN and DYCK…RLRL. 2 disordered regions span residues 182–203 and 266–290; these read QSHS…EGSE and ESKQ…GYVQ. The segment at 246–276 adopts a Matrin-type 3 zinc-finger fold; it reads FYCSMCNVGAGEEVEFRQHLESKQHKSKVSE. Basic and acidic residues predominate over residues 266–283; the sequence is ESKQHKSKVSEQRYRSEM.

As to quaternary structure, interacts with dsRNA. Constitutively expressed in brain and testis. Also expressed in lung, kidney and spleen after whole body gamma irradiation.

Its subcellular location is the nucleus. The protein resides in the nucleolus. In terms of biological role, acts as a bona fide target gene of p53/TP53. May play a role in the TP53-dependent growth regulatory pathway. May contribute to TP53-mediated apoptosis by regulation of TP53 expression and translocation to the nucleus and nucleolus. In Mus musculus (Mouse), this protein is Zinc finger matrin-type protein 3.